A 762-amino-acid chain; its full sequence is Polyribonucleotide nucleotidyltransferase (762 aa).

Residues Asp-531 and Asp-537 each coordinate Mg(2+). The KH domain occupies 597–656 (PRVTTIKVPVDKIGEVIGPKGKVINSITEETRAQISIEDDGTVFVGATDGPSAQAAIDKI). The S1 motif domain occupies 668–737 (GERFLGTVVK…KRGKISLVLV (70 aa)).

Belongs to the polyribonucleotide nucleotidyltransferase family. It depends on Mg(2+) as a cofactor.

Its subcellular location is the cytoplasm. The enzyme catalyses RNA(n+1) + phosphate = RNA(n) + a ribonucleoside 5'-diphosphate. Functionally, involved in mRNA degradation. Catalyzes the phosphorolysis of single-stranded polyribonucleotides processively in the 3'- to 5'-direction. In Mycobacterium ulcerans (strain Agy99), this protein is Polyribonucleotide nucleotidyltransferase.